The following is a 217-amino-acid chain: Somatotropin (217 aa).

A signal peptide spans 1–26 (MATGSRTSLLLAFTLLCLPQLKEAGA). Histidine 44 is a Zn(2+) binding site. A disulfide bridge links cysteine 79 with cysteine 191. Serine 132 carries the post-translational modification Phosphoserine. Glutamate 200 contributes to the Zn(2+) binding site. A disulfide bridge links cysteine 208 with cysteine 215.

It belongs to the somatotropin/prolactin family.

It is found in the secreted. Its function is as follows. Plays an important role in growth control. Its major role in stimulating body growth is to stimulate the liver and other tissues to secrete IGF1. It stimulates both the differentiation and proliferation of myoblasts. It also stimulates amino acid uptake and protein synthesis in muscle and other tissues. The sequence is that of Somatotropin (GH1) from Saimiri boliviensis boliviensis (Bolivian squirrel monkey).